We begin with the raw amino-acid sequence, 233 residues long: Flagellar calcium-binding protein TB-17 (233 aa).

Over residues 1–11 (MGCSGSKNASN) the composition is skewed to polar residues. Residues 1–29 (MGCSGSKNASNPKDGAASKGGKDGKTTAD) are disordered. The span at 20–29 (GGKDGKTTAD) shows a compositional bias: basic and acidic residues. EF-hand domains follow at residues 48 to 83 (ESKS…ILKL), 130 to 165 (YDIF…LKEW), and 167 to 202 (VDIT…KKLQ). Residues Asp-61, Asn-63, Thr-65, Lys-67, Glu-72, Asp-143, Asp-145, Ser-147, Glu-154, Asp-180, Asn-182, Ser-184, and Glu-191 each coordinate Ca(2+). Residues 203 to 233 (VSGDPDDEENGANEGDGANAGDGVPAAEGSA) are disordered. The segment covering 214–225 (ANEGDGANAGDG) has biased composition (low complexity).

Belongs to the calflagin family.

It is found in the cell projection. Its subcellular location is the cilium. It localises to the flagellum. In terms of biological role, may contribute to the rapid motility of the trypanosomes, playing a role either in flagellar structure or in calcium metabolism. Could alternate between a GDP-bound inactive form to a calcium/GTP-bound active form. The chain is Flagellar calcium-binding protein TB-17 (FCABP) from Trypanosoma brucei brucei.